The following is a 525-amino-acid chain: GMP synthase [glutamine-hydrolyzing] (525 aa).

Residues Thr-13 to Asn-202 enclose the Glutamine amidotransferase type-1 domain. Cys-89 functions as the Nucleophile in the catalytic mechanism. Catalysis depends on residues His-176 and Glu-178. Positions Trp-203–Arg-400 constitute a GMPS ATP-PPase domain. Ser-231–Thr-237 serves as a coordination point for ATP. Positions 304, 462, 517, and 523 each coordinate XMP.

Homodimer. Requires Mg(2+) as cofactor.

The protein localises to the cytoplasm. The protein resides in the cytosol. It carries out the reaction XMP + L-glutamine + ATP + H2O = GMP + L-glutamate + AMP + diphosphate + 2 H(+). Its pathway is purine metabolism; GMP biosynthesis; GMP from XMP (L-Gln route): step 1/1. Functionally, catalyzes the conversion of xanthine monophosphate (XMP) to GMP in the presence of glutamine and ATP through an adenyl-XMP intermediate. The sequence is that of GMP synthase [glutamine-hydrolyzing] (GUA1) from Candida glabrata (strain ATCC 2001 / BCRC 20586 / JCM 3761 / NBRC 0622 / NRRL Y-65 / CBS 138) (Yeast).